Here is a 577-residue protein sequence, read N- to C-terminus: 2-succinyl-5-enolpyruvyl-6-hydroxy-3-cyclohexene-1-carboxylate synthase (577 aa).

Belongs to the TPP enzyme family. MenD subfamily. As to quaternary structure, homodimer. Requires Mg(2+) as cofactor. It depends on Mn(2+) as a cofactor. The cofactor is thiamine diphosphate.

The catalysed reaction is isochorismate + 2-oxoglutarate + H(+) = 5-enolpyruvoyl-6-hydroxy-2-succinyl-cyclohex-3-ene-1-carboxylate + CO2. It functions in the pathway quinol/quinone metabolism; 1,4-dihydroxy-2-naphthoate biosynthesis; 1,4-dihydroxy-2-naphthoate from chorismate: step 2/7. Its pathway is quinol/quinone metabolism; menaquinone biosynthesis. Catalyzes the thiamine diphosphate-dependent decarboxylation of 2-oxoglutarate and the subsequent addition of the resulting succinic semialdehyde-thiamine pyrophosphate anion to isochorismate to yield 2-succinyl-5-enolpyruvyl-6-hydroxy-3-cyclohexene-1-carboxylate (SEPHCHC). This Christiangramia forsetii (strain DSM 17595 / CGMCC 1.15422 / KT0803) (Gramella forsetii) protein is 2-succinyl-5-enolpyruvyl-6-hydroxy-3-cyclohexene-1-carboxylate synthase.